The primary structure comprises 396 residues: Bone morphogenetic protein 2 (396 aa).

Positions 1–23 (MVAGTRCLLALLLPQVLLGGAAG) are cleaved as a signal peptide. Positions 24 to 282 (LVPELGRRKF…GHPLHKREKR (259 aa)) are cleaved as a propeptide — cleaved by PCSK5. A disordered region spans residues 84-121 (RRHSGQPGSPAPDHRLERAASRANTVRSFHHEESLEEL). At S87 the chain carries Phosphoserine. N-linked (GlcNAc...) asparagine glycosylation is found at N135, N163, N164, and N200. Residues 271–293 (GKGHPLHKREKRQAKHKQRKRLK) are disordered. The segment covering 274–293 (HPLHKREKRQAKHKQRKRLK) has biased composition (basic residues). Intrachain disulfides connect C296–C361, C325–C393, and C329–C395. Residue N338 is glycosylated (N-linked (GlcNAc...) (high mannose) asparagine).

It belongs to the TGF-beta family. In terms of assembly, homodimer; disulfide-linked. Interacts with SOSTDC1. Interacts with GREM2, RGMA, RGMB and RGMC. Interacts with ASPN. Interacts with MAFP5. Interacts with FBN1 (via N-terminal domain) and FBN2. Interacts with type I receptor BMPR1A. Interacts with type II receptor BMPR2. Interacts with SCUBE3. Interacts with TNFAIP6 (primarily via Link domain); this interaction is inhibited by hyaluronan. Interacts with ERFE. Interacts with BMPR1A/ALK3; the interaction may induce HAMP expression. Forms heterodimers with BMP6 in vitro; the heterodimer then binds to its receptor BMPR1A /ALK3 and may induce HAMP expression. Interacts with TGFBR3. Particularly abundant in lung, spleen and colon and in low but significant levels in heart, brain, placenta, liver, skeletal muscle, kidney, pancreas, prostate, ovary and small intestine.

The protein localises to the secreted. In terms of biological role, growth factor of the TGF-beta superfamily that plays essential roles in many developmental processes, including cardiogenesis, neurogenesis, and osteogenesis. Induces cartilage and bone formation. Initiates the canonical BMP signaling cascade by associating with type I receptor BMPR1A and type II receptor BMPR2. Once all three components are bound together in a complex at the cell surface, BMPR2 phosphorylates and activates BMPR1A. In turn, BMPR1A propagates signal by phosphorylating SMAD1/5/8 that travel to the nucleus and act as activators and repressors of transcription of target genes. Also acts to promote expression of HAMP, via the interaction with its receptor BMPR1A/ALK3. Can also signal through non-canonical pathways such as ERK/MAP kinase signaling cascade that regulates osteoblast differentiation. Also stimulates the differentiation of myoblasts into osteoblasts via the EIF2AK3-EIF2A-ATF4 pathway by stimulating EIF2A phosphorylation which leads to increased expression of ATF4 which plays a central role in osteoblast differentiation. Acts as a positive regulator of odontoblast differentiation during mesenchymal tooth germ formation, expression is repressed during the bell stage by MSX1-mediated inhibition of CTNNB1 signaling. This chain is Bone morphogenetic protein 2 (BMP2), found in Homo sapiens (Human).